Reading from the N-terminus, the 271-residue chain is Putative carboxymethylenebutenolidase (271 aa).

Catalysis depends on residues C147, D204, and H236.

Belongs to the dienelactone hydrolase family.

The catalysed reaction is 2-(5-oxo-2,5-dihydrofuran-2-ylidene)acetate + H2O = 4-oxohex-2-enedioate + H(+). This is Putative carboxymethylenebutenolidase (ysgA) from Escherichia coli O157:H7.